The following is a 429-amino-acid chain: Glutamate-1-semialdehyde 2,1-aminomutase (429 aa).

Lys265 is modified (N6-(pyridoxal phosphate)lysine).

This sequence belongs to the class-III pyridoxal-phosphate-dependent aminotransferase family. HemL subfamily. As to quaternary structure, homodimer. Requires pyridoxal 5'-phosphate as cofactor.

The protein localises to the cytoplasm. It carries out the reaction (S)-4-amino-5-oxopentanoate = 5-aminolevulinate. The protein operates within porphyrin-containing compound metabolism; protoporphyrin-IX biosynthesis; 5-aminolevulinate from L-glutamyl-tRNA(Glu): step 2/2. In Chromohalobacter salexigens (strain ATCC BAA-138 / DSM 3043 / CIP 106854 / NCIMB 13768 / 1H11), this protein is Glutamate-1-semialdehyde 2,1-aminomutase.